The sequence spans 638 residues: Stress-activated protein kinase alpha (638 aa).

ANK repeat units lie at residues 43–72 (YGQSALTIALKNNNEEMVELLLSLCVTLKA), 80–109 (NGFSALHQAVSSDDRILMRVLQYENINVDV), 113–146 (DLNTPIHYFCQKFRSPNCQEPFQLFIQKGVNVNA), 150–181 (NGETPLHKAIFNNSVRLMMVGLLLKNGANVNL), 185–214 (FQESPLHYAVRLGREDLVSVLLKAGADVDC), and 219–248 (ERKTPYQLAVEEGNKDMTARIKKYKDLFDW). The region spanning 240 to 303 (KKYKDLFDWL…LKETSNLANE (64 aa)) is the SAM domain. In terms of domain architecture, Protein kinase spans 351 to 620 (LEYTEKLGAG…RLVTIENEYR (270 aa)). ATP-binding positions include 357–365 (LGAGSSGKV) and lysine 378. Aspartate 472 acts as the Proton acceptor in catalysis.

This sequence belongs to the protein kinase superfamily. TKL Ser/Thr protein kinase family. As to quaternary structure, interacts with F-actin. In terms of processing, autophosphorylated.

The protein localises to the cytoplasm. Its subcellular location is the cytoskeleton. It catalyses the reaction L-seryl-[protein] + ATP = O-phospho-L-seryl-[protein] + ADP + H(+). It carries out the reaction L-threonyl-[protein] + ATP = O-phospho-L-threonyl-[protein] + ADP + H(+). May be involved in cortical F-actin organization and resistance to osmotic stress. Activated upon cell detachment, in vitro. This Dictyostelium discoideum (Social amoeba) protein is Stress-activated protein kinase alpha (spkA-1).